The following is a 488-amino-acid chain: ATP synthase subunit beta (488 aa).

Position 164–171 (164–171 (GGAGVGKT)) interacts with ATP.

This sequence belongs to the ATPase alpha/beta chains family. As to quaternary structure, F-type ATPases have 2 components, CF(1) - the catalytic core - and CF(0) - the membrane proton channel. CF(1) has five subunits: alpha(3), beta(3), gamma(1), delta(1), epsilon(1). CF(0) has four main subunits: a(1), b(1), b'(1) and c(9-12).

It is found in the cellular thylakoid membrane. It carries out the reaction ATP + H2O + 4 H(+)(in) = ADP + phosphate + 5 H(+)(out). In terms of biological role, produces ATP from ADP in the presence of a proton gradient across the membrane. The catalytic sites are hosted primarily by the beta subunits. The sequence is that of ATP synthase subunit beta from Prochlorococcus marinus (strain SARG / CCMP1375 / SS120).